Reading from the N-terminus, the 109-residue chain is Small ribosomal subunit protein uS10 (109 aa).

It belongs to the universal ribosomal protein uS10 family. As to quaternary structure, part of the 30S ribosomal subunit.

Its function is as follows. Involved in the binding of tRNA to the ribosomes. The polypeptide is Small ribosomal subunit protein uS10 (Wolbachia pipientis wMel).